A 165-amino-acid chain; its full sequence is Small ribosomal subunit protein uS5 (165 aa).

Residues 10-73 (QIEKLISLNR…TSARKNLRFV (64 aa)) enclose the S5 DRBM domain.

The protein belongs to the universal ribosomal protein uS5 family. As to quaternary structure, part of the 30S ribosomal subunit. Contacts proteins S4 and S8.

In terms of biological role, with S4 and S12 plays an important role in translational accuracy. Located at the back of the 30S subunit body where it stabilizes the conformation of the head with respect to the body. The protein is Small ribosomal subunit protein uS5 of Borreliella afzelii (strain PKo) (Borrelia afzelii).